We begin with the raw amino-acid sequence, 101 residues long: Small ribosomal subunit protein uS14 (101 aa).

Belongs to the universal ribosomal protein uS14 family. In terms of assembly, part of the 30S ribosomal subunit. Contacts proteins S3 and S10.

Binds 16S rRNA, required for the assembly of 30S particles and may also be responsible for determining the conformation of the 16S rRNA at the A site. In Wigglesworthia glossinidia brevipalpis, this protein is Small ribosomal subunit protein uS14.